The sequence spans 71 residues: Ceratotoxin-A (71 aa).

The signal sequence occupies residues 1–23; that stretch reads MANLKAVFLICIVAFIALQCVVA. 2 consecutive propeptides follow at residues 24-35 and 65-71; these read EPAAEDSVVVKR and VAAGLVG.

Homomer of four to six subunits.

It is found in the secreted. Functionally, female-specific peptides with potent activity against Gram-positive and Gram-negative bacteria. They have as well hemolytic activity. This Ceratitis capitata (Mediterranean fruit fly) protein is Ceratotoxin-A (CTXA1).